We begin with the raw amino-acid sequence, 560 residues long: Radial spoke head protein 3 homolog (560 aa).

Disordered regions lie at residues 134–186 and 225–249; these read RKRG…EEPM and ARKRALARKQAQEQLRPQTPEPVEG. Over residues 153-162 the composition is skewed to polar residues; it reads RAPSTYTYTS. Positions 215–239 form a coiled coil; sequence DSLELQRQREARKRALARKQAQEQL. At threonine 286 the chain carries Phosphothreonine; by MAPK1. Residues 331 to 385 adopt a coiled-coil conformation; sequence LEVMEEEELANLRASQREYEELRNSERAEVQRLEEQERRHREEKERRKKQQWEIM. Disordered stretches follow at residues 354 to 375, 473 to 498, and 526 to 560; these read NSERAEVQRLEEQERRHREEKE, HGEDTHQSPEPEDEPGGPGAMTESLE, and DRRSSQERKFMEERELLGQDEETAMRKSLGEEELS.

The protein belongs to the flagellar radial spoke RSP3 family. Component of the axonemal radial spoke 1 (RS1) and 2 (RS2) complexes, at least composed of spoke head proteins RSPH1, RSPH3, RSPH9 and the cilia-specific component RSPH4A or sperm-specific component RSPH6A, spoke stalk proteins RSPH14, DNAJB13, DYDC1, ROPN1L and NME5, and the RS1 complex-specific anchor protein IQUB. Interacts with IQUB. Interacts with phosphorylated MAPK1. Interacts with MEK1. Interacts with PKA regulatory subunits PRKAR1A and PRKAR1B. Interacts with RSPH1. Interacts with RSPH4A. Interacts with RSPH6A. Interacts with RSPH9. Interacts with LRRC23.

It localises to the cytoplasm. Its subcellular location is the cytoskeleton. The protein resides in the cilium axoneme. It is found in the flagellum axoneme. Functions as part of axonemal radial spoke complexes that play an important part in the motility of sperm and cilia. Functions as a protein kinase A-anchoring protein that scaffolds the cAMP-dependent protein kinase holoenzyme. May serve as a point of convergence for MAPK and PKA signaling in cilia. This is Radial spoke head protein 3 homolog (RSPH3) from Homo sapiens (Human).